The following is a 223-amino-acid chain: PRA1 family protein B5 (223 aa).

5 helical membrane-spanning segments follow: residues 83–103, 105–125, 146–166, 170–190, and 196–216; these read SSYFRVNYVCIVALILGFSLL, HPFSLILLLCLAASWLFLYLF, GGLILSTIAVIFFTSVGSVLI, MIGIATICVHGAFRAPDDLFL, and AASGFLSFIGVPAIPSVAPSA.

This sequence belongs to the PRA1 family. Interacts with PRA1B1, PRA1B2, PRA1B3, PRA1B4, PRA1B6 and PRA1E. Expressed in roots, lateral roots, lateral root caps, columella cells, leaves, and shoot apex.

It localises to the endosome membrane. Functionally, may be involved in both secretory and endocytic intracellular trafficking in the endosomal/prevacuolar compartments. The sequence is that of PRA1 family protein B5 (PRA1B5) from Arabidopsis thaliana (Mouse-ear cress).